Here is a 434-residue protein sequence, read N- to C-terminus: Mannose-6-phosphate isomerase (434 aa).

The Zn(2+) site is built by glutamine 109, histidine 111, and glutamate 136. A compositionally biased stretch (polar residues) spans 181 to 191 (SLGLPTSQPPD). Residues 181–200 (SLGLPTSQPPDTSLFKPTES) are disordered. Zn(2+) is bound at residue histidine 291. Arginine 310 is an active-site residue.

Belongs to the mannose-6-phosphate isomerase type 1 family. The cofactor is Zn(2+).

The protein localises to the cytoplasm. The catalysed reaction is D-mannose 6-phosphate = D-fructose 6-phosphate. It participates in nucleotide-sugar biosynthesis; GDP-alpha-D-mannose biosynthesis; alpha-D-mannose 1-phosphate from D-fructose 6-phosphate: step 1/2. Involved in the synthesis of the GDP-mannose and dolichol-phosphate-mannose required for a number of critical mannosyl transfer reactions. This is Mannose-6-phosphate isomerase (MAN1) from Cryptococcus neoformans var. neoformans serotype D (strain JEC21 / ATCC MYA-565) (Filobasidiella neoformans).